The chain runs to 250 residues: MKITPVKALTDNYIWMIQHGNHAVCVDPSEPSPVLEFLVRNRLMLAQTWVTHPHPDHEGGAAALWRGYMESPVYGESDIEAATHTVTAGTQFTFGDGQVTVWATPGHTDRHTSYLLETSDGIHVFCGDTLFSAGCGRVFTGTIEQLYDSFQRFNRLPENTLFYPAHEYTAANLRFAAHIEPDNADIQTALKAAERTPTLPVTLAHERRVNPFLRTEIPAVRQRAEALVGKTLNSGLEVFAALRELKNAYC.

The Zn(2+) site is built by His52, His54, Asp56, His57, His107, Asp128, and His166.

It belongs to the metallo-beta-lactamase superfamily. Glyoxalase II family. In terms of assembly, monomer. Zn(2+) is required as a cofactor.

It carries out the reaction an S-(2-hydroxyacyl)glutathione + H2O = a 2-hydroxy carboxylate + glutathione + H(+). It participates in secondary metabolite metabolism; methylglyoxal degradation; (R)-lactate from methylglyoxal: step 2/2. Its function is as follows. Thiolesterase that catalyzes the hydrolysis of S-D-lactoyl-glutathione to form glutathione and D-lactic acid. The chain is Hydroxyacylglutathione hydrolase from Neisseria meningitidis serogroup A / serotype 4A (strain DSM 15465 / Z2491).